A 160-amino-acid polypeptide reads, in one-letter code: Phosphatidylinositol N-acetylglucosaminyltransferase subunit gpi15 (160 aa).

The next 2 helical transmembrane spans lie at glycine 22–isoleucine 42 and isoleucine 48–valine 68.

It belongs to the PIGH family.

The protein localises to the endoplasmic reticulum membrane. It catalyses the reaction a 1,2-diacyl-sn-glycero-3-phospho-(1D-myo-inositol) + UDP-N-acetyl-alpha-D-glucosamine = a 6-(N-acetyl-alpha-D-glucosaminyl)-1-(1,2-diacyl-sn-glycero-3-phospho)-1D-myo-inositol + UDP + H(+). It participates in glycolipid biosynthesis; glycosylphosphatidylinositol-anchor biosynthesis. Part of the complex catalyzing the transfer of N-acetylglucosamine from UDP-N-acetylglucosamine to phosphatidylinositol, the first step of GPI biosynthesis. The protein is Phosphatidylinositol N-acetylglucosaminyltransferase subunit gpi15 (gpi15) of Schizosaccharomyces pombe (strain 972 / ATCC 24843) (Fission yeast).